The following is a 341-amino-acid chain: Biotin synthase (341 aa).

The Radical SAM core domain occupies 56-285 (ADIQRAALLS…KARVRLSAGR (230 aa)). Residues Cys71, Cys75, and Cys78 each contribute to the [4Fe-4S] cluster site. [2Fe-2S] cluster is bound by residues Cys116, Cys148, Cys208, and Arg280.

Belongs to the radical SAM superfamily. Biotin synthase family. In terms of assembly, homodimer. It depends on [4Fe-4S] cluster as a cofactor. [2Fe-2S] cluster is required as a cofactor.

It carries out the reaction (4R,5S)-dethiobiotin + (sulfur carrier)-SH + 2 reduced [2Fe-2S]-[ferredoxin] + 2 S-adenosyl-L-methionine = (sulfur carrier)-H + biotin + 2 5'-deoxyadenosine + 2 L-methionine + 2 oxidized [2Fe-2S]-[ferredoxin]. The protein operates within cofactor biosynthesis; biotin biosynthesis; biotin from 7,8-diaminononanoate: step 2/2. In terms of biological role, catalyzes the conversion of dethiobiotin (DTB) to biotin by the insertion of a sulfur atom into dethiobiotin via a radical-based mechanism. In Methylorubrum populi (strain ATCC BAA-705 / NCIMB 13946 / BJ001) (Methylobacterium populi), this protein is Biotin synthase.